Reading from the N-terminus, the 553-residue chain is MSLGGASERSVPATKIEITVSCRNLLDLDTFSKSDPMVVLYTQSRASQEWREFGRTEVIDNTLNPDFVRKFVLDYFFEEKQNLRFDVYNVDSKTNISKPKDFLGQAFLALGEVIGGQGSRVERTLTGVPGKKCGTILLTAEELSNCRDIATMQLCANKLDKKDFFGKSDPFLVFYRSNEDGTFTICHKTEVVKNTLNPVWQPFSIPVRALCNGDYDRTVKIDVYDWDRDGSHDFIGEFTTSYRELSKAQNQFTVYEVLNPRKKCKKKKYVNSGTVTLLSFSVDSEFTFVDYIKGGTQLNFTVAIDFTASNGNPLQPTSLHYMSPYQLSAYAMALKAVGEIIQDYDSDKLFPAYGFGAKLPPEGRISHQFPLNNNDEDPNCAGIEGVLESYFQSLRTVQLYGPTYFAPVINQVARAAAKISDGSQYYVLLIITDGVISDMTQTKEAIVSASSLPMSIIIVGVGPAMFEAMEELDGDDVRVSSRGRYAERDIVQFVPFRDYVDRSGNQVLSMARLAKDVLAEIPEQLLSYMRTRDIQPRPPPPANPSPIPAPEQP.

C2 domains are found at residues 1 to 125 (MSLG…ERTL) and 132 to 255 (KCGT…FTVY). N95 carries N-linked (GlcNAc...) asparagine glycosylation. Ca(2+) contacts are provided by D163, D169, D225, D227, and D233. Residues 299 to 500 (NFTVAIDFTA…VQFVPFRDYV (202 aa)) form the VWFA domain. Residues 531–553 (TRDIQPRPPPPANPSPIPAPEQP) form a disordered region. A compositionally biased stretch (pro residues) spans 536-553 (PRPPPPANPSPIPAPEQP).

The protein belongs to the copine family. It depends on Ca(2+) as a cofactor. In terms of tissue distribution, expressed in melanocytes.

In terms of biological role, probable calcium-dependent phospholipid-binding protein that may play a role in calcium-mediated intracellular processes. Plays a role in dendrite formation by melanocytes. The sequence is that of Copine-9 from Homo sapiens (Human).